A 561-amino-acid polypeptide reads, in one-letter code: Putative transport protein YbjL (561 aa).

The next 5 helical transmembrane spans lie at 8–28, 32–52, 66–86, 94–114, and 158–178; these read LLNG…LCLG, LGSV…LLGQ, FMLF…SIFF, MLAL…GKLF, and NLSL…IVGA. RCK C-terminal domains follow at residues 200–288 and 292–373; these read RGLD…SFRN and VFDR…RIGF. A run of 5 helical transmembrane segments spans residues 383–403, 406–426, 447–467, 475–495, and 537–557; these read LLAF…TFQF, FSFG…LGFL, FGLM…INNG, MLIA…LFGA, and GTYA…VIIW.

Belongs to the AAE transporter (TC 2.A.81) family. YbjL subfamily.

The protein resides in the cell membrane. This Salmonella choleraesuis (strain SC-B67) protein is Putative transport protein YbjL.